The chain runs to 144 residues: Large ribosomal subunit protein uL15 (144 aa).

Positions 1 to 54 (MRLNTLSPAPGRVTSRKRVGRGIGSGLGKTAGRGHKGLKSRSGGTVKPGFEGGQ) are disordered. Residues 21–31 (RGIGSGLGKTA) show a composition bias toward gly residues.

Belongs to the universal ribosomal protein uL15 family. As to quaternary structure, part of the 50S ribosomal subunit.

Its function is as follows. Binds to the 23S rRNA. This is Large ribosomal subunit protein uL15 from Teredinibacter turnerae (strain ATCC 39867 / T7901).